Consider the following 2136-residue polypeptide: Methylcytosine dioxygenase TET1 (2136 aa).

Basic residues-rich tracts occupy residues 1-12 (MSRSRHARPSRL) and 20-31 (KKKKNSQLRKTT). Residues 1–47 (MSRSRHARPSRLVRKEDVNKKKKNSQLRKTTKGANKNVASVKTLSPG) form a disordered region. Residues 32–43 (KGANKNVASVKT) show a composition bias toward polar residues. The tract at residues 528–674 (LGIAQLSQAG…NGPKSESMDY (147 aa)) is sufficient for binding to genomic CpG islands. The CXXC-type zinc-finger motif lies at 584 to 625 (EKKKRKRCGVCEPCQQKTNCGECTYCKNRKNSHQICKKRKCE). Residues cysteine 591, cysteine 594, cysteine 597, cysteine 603, cysteine 606, cysteine 609, cysteine 619, and cysteine 624 each coordinate Zn(2+). 3 stretches are compositionally biased toward basic and acidic residues: residues 712–724 (QNKKSQLTDHVKG), 732–743 (EAEKSKNSEVDK), and 849–869 (IHNEGDQPKTPENIPSKEPKD). Disordered stretches follow at residues 712–746 (QNKKSQLTDHVKGDFSANVPEAEKSKNSEVDKKRT), 849–876 (IHNEGDQPKTPENIPSKEPKDGSPVQPS), 899–923 (QLSEAPSENSSPSKSEKDEESEQRT), and 1119–1169 (EKGT…VSYQ). Serine 871 is subject to Phosphoserine. The segment covering 901–911 (SEAPSENSSPS) has biased composition (low complexity). Positions 1119–1139 (EKGTIQQKPPSSVHNNHGSSL) are enriched in polar residues. Basic residues predominate over residues 1146-1163 (TQKKTKSTPSRDRRKKKP). Cysteine 1422, cysteine 1424, cysteine 1482, histidine 1508, and cysteine 1510 together coordinate Zn(2+). A 2-oxoglutarate-binding site is contributed by arginine 1551. Cysteine 1561, cysteine 1563, cysteine 1579, and cysteine 1588 together coordinate Zn(2+). An interaction with DNA region spans residues 1580–1593 (SWSMYFNGCKFGRS). A Glycyl lysine isopeptide (Lys-Gly) (interchain with G-Cter in ubiquitin) cross-link involves residue lysine 1589. Cysteine 1648 contributes to the Zn(2+) binding site. A 2-oxoglutarate-binding site is contributed by cysteine 1664. Residue histidine 1670 coordinates Zn(2+). Residues histidine 1672 and aspartate 1674 each contribute to the Fe cation site. Asparagine 1677 contributes to the substrate binding site. Histidine 1706 is a 2-oxoglutarate binding site. 2 disordered regions span residues 1774–1897 (EKKP…AAAD) and 1919–1984 (EPLI…SPAE). A compositionally biased stretch (low complexity) spans 1786-1800 (NSTTTNNSKPSSLPT). Composition is skewed to polar residues over residues 1824-1833 (SSDNTKTYSL) and 1937-1953 (HQPNHQPSFLTSPQDLA). Residues 1957 to 1976 (MEEDEQHSEADEPPSDEPLS) show a composition bias toward acidic residues. Position 2028 (histidine 2028) interacts with Fe cation. A 2-oxoglutarate-binding site is contributed by 2043–2045 (RLS). Residue 2049 to 2051 (YQH) participates in substrate binding. Histidine 2059 contributes to the Zn(2+) binding site. The span at 2074–2087 (KNKKMKASEQKDQA) shows a compositional bias: basic and acidic residues. Positions 2074 to 2100 (KNKKMKASEQKDQAANEGPEQSSEVNE) are disordered.

This sequence belongs to the TET family. In terms of assembly, interacts with SIN3A; recruits the transcriptional corepressor SIN3A to gene promoters. Interacts with HCFC1. Interacts (via C-terminus) with OGT. Found in a complex composed of at least SINHCAF, SIN3A, HDAC1, SAP30, RBBP4, OGT and TET1. Interacts with QSER1. Interacts with NONO (via DNA-binding domain); this interaction recruits TET1 to genomic loci. Interacts with FOXA2; this interaction may recruit TET1 to specific enhancers to preserve their unmethylated status and hence allowing gene expression. Interacts with RNF2. Directly interacts (via C-terminus) with the DCAF1 component of the CRL4(VprBP) E3 ubiquitin-protein ligase complex. Interacts with UHRF1; this interaction induces the recruitment of TET1 to replicating heterochromatin. Interacts with DCAF1. It depends on Fe(2+) as a cofactor. Zn(2+) serves as cofactor. In terms of processing, glycosylated. Interaction with OGT leads to GlcNAcylation. Post-translationally, monoubiquitinated at Lys-1589 by the DCX (DDB1-CUL4-X-box) E3 ubiquitin-protein ligase complex called CRL4(VprBP) or CUL4A-RBX1-DDB1-DCAF1/VPRBP complex; this modification promotes binding to DNA. As to expression, expressed in fetal heart, lung and brain, and in adult skeletal muscle, thymus and ovary. Not detected in adult heart, lung or brain. Up-regulated in glioblastoma cells (at protein level). Expressed in embryonic stem cells (at protein level).

The protein resides in the nucleus. Its subcellular location is the chromosome. The enzyme catalyses a 5-methyl-2'-deoxycytidine in DNA + 2-oxoglutarate + O2 = a 5-hydroxymethyl-2'-deoxycytidine in DNA + succinate + CO2. The catalysed reaction is a 5-hydroxymethyl-2'-deoxycytidine in DNA + 2-oxoglutarate + O2 = a 5-formyl-2'-deoxycytidine in DNA + succinate + CO2 + H2O. It carries out the reaction a 5-formyl-2'-deoxycytidine in DNA + 2-oxoglutarate + O2 = a 5-carboxyl-2'-deoxycytidine in DNA + succinate + CO2 + H(+). Dioxygenase that plays a key role in active DNA demethylation, by catalyzing the sequential oxidation of the modified genomic base 5-methylcytosine (5mC) into 5-hydroxymethylcytosine (5hmC), 5-formylcytosine (5fC), and 5-carboxylcytosine (5caC). In addition to its role in DNA demethylation, plays a more general role in chromatin regulation by recruiting histone modifying protein complexes to alter histone marks and chromatin accessibility, leading to both activation and repression of gene expression. Plays therefore a role in many biological processes, including stem cell maintenance, T- and B-cell development, inflammation regulation, genomic imprinting, neural activity or DNA repair. Involved in the balance between pluripotency and lineage commitment of cells and plays a role in embryonic stem cells maintenance and inner cell mass cell specification. Together with QSER1, plays an essential role in the protection and maintenance of transcriptional and developmental programs to inhibit the binding of DNMT3A/3B and therefore de novo methylation. May play a role in pancreatic beta-cell specification during development. In this context, may function as an upstream epigenetic regulator of PAX4 presumably through direct recruitment by FOXA2 to a PAX4 enhancer to preserve its unmethylated status, thereby potentiating PAX4 expression to adopt beta-cell fate during endocrine lineage commitment. Under DNA hypomethylation conditions, such as in female meiotic germ cells, may induce epigenetic reprogramming of pericentromeric heterochromatin (PCH), the constitutive heterochromatin of pericentromeric regions. PCH forms chromocenters in the interphase nucleus and chromocenters cluster at the prophase of meiosis. In this context, may also be essential for chromocenter clustering in a catalytic activity-independent manner, possibly through the recruitment polycomb repressive complex 1 (PRC1) to the chromocenters. During embryonic development, may be required for normal meiotic progression in oocytes and meiotic gene activation. Binds preferentially to DNA containing cytidine-phosphate-guanosine (CpG) dinucleotides over CpH (H=A, T, and C), hemimethylated-CpG and hemimethylated-hydroxymethyl-CpG. Functionally, dioxygenase that plays a key role in active DNA demethylation. Binds to promoters, particularly to those with high CG content. In hippocampal neurons, isoform 1 regulates the expression of a unique subset of genes compared to isoform 2, although some overlap exists between both isoforms, hence differentially regulates excitatory synaptic transmission. In hippocampal neuron cell cultures, isoform 1 controls both miniature excitatory postsynaptic current amplitude and frequency. Isoform 1 may regulate genes involved in hippocampal-dependent memory, leading to positive regulation of memory, contrary to isoform 2 that may decrease memory. Its function is as follows. Dioxygenase that plays a key role in active DNA demethylation. As isoform 1, binds to promoters, particularly to those with high CG content, however displays reduced global chromatin affinity compared with isoform 1, leading to decreased global DNA demethylation compared with isoform 1. Contrary to isoform 1, isoform 2 localizes during S phase to sites of ongoing DNA replication in heterochromatin, causing a significant de novo 5hmC formation, globally, and more so in heterochromatin, including LINE 1 interspersed DNA repeats leading to their activation. In hippocampal neurons, isoform 2 regulates the expression of a unique subset of genes compared to isoform 1, although some overlap between both isoforms, hence differentially regulates excitatory synaptic transmission. In hippocampal neuron cell cultures, isoform 2 controls miniature excitatory postsynaptic current frequency, but not amplitude. Isoform 2 may regulate genes involved in hippocampal-dependent memory, leading to negative regulation of memory, contrary to isoform 1 that may improve memory. In immature and partially differentiated gonadotrope cells, directly represses luteinizing hormone gene LHB expression and does not catalyze 5hmC at the gene promoter. The protein is Methylcytosine dioxygenase TET1 of Homo sapiens (Human).